Consider the following 523-residue polypeptide: L-tyrosine:2-oxoglutarate aminotransferase ucdG (523 aa).

This sequence belongs to the class-I pyridoxal-phosphate-dependent aminotransferase family. As to quaternary structure, homodimer. Pyridoxal 5'-phosphate is required as a cofactor.

It localises to the cytoplasm. It carries out the reaction L-tyrosine + 2-oxoglutarate = 3-(4-hydroxyphenyl)pyruvate + L-glutamate. The protein operates within secondary metabolite biosynthesis. Functionally, nonribosomal peptide synthetase that mediates the biosynthesis of usterphenyllins and uscandidusins, p-terphenyl derivatives. Within the pathway, ucdG is probably involved in the conversion of L-tyrosine into 4-hydroxyphenylpyruvate (HPPA) as a precursor for the usterphenyllin and uscandidusin biosynthesis. UcdE further prenylates position C-14 of ring C of usterphenyllin B to form usterphenyllin A. The pathway begin with the biosynthesis of 4-hydroxyphenylpyruvate (HPPA) from L-tyrosine, possibly by the aminotransferase ucdG. The nonribosomal peptide synthetase ucdA then condenses two HPPA units to produce atromentin. The key step in this pathway is the reduction and dehydration of atromentin to form a terphenyl triol intermediate, performed by the NAD-dependent dehydrogenase ucdB. Further O-methylation by the methyltransferase ucdC forms terphenyllin carrying two methoxy moieties at C-9 and C-12, and subsequent dihydroxylation at C-3 of ring A and C-15 of ring C by the flavin-dependent oxygenase ucdD leads to 3,15-dihydroxyterphenyllin. Prenylation by ucdE at position C-5 of ring A forms usterphenyllin B, and is followed by a second prenylation at position C-14 of ring C to form usterphenyllin A. The following furan ring formation that leads to uscandidusins A and B was proven to be an unexpected spontaneous non-enzymatic reaction. This Aspergillus ustus protein is L-tyrosine:2-oxoglutarate aminotransferase ucdG.